We begin with the raw amino-acid sequence, 243 residues long: 4-hydroxy-tetrahydrodipicolinate reductase (243 aa).

NAD(+)-binding positions include 9 to 14 (GANGKM), 78 to 80 (GTS), and 104 to 107 (APNF). The active-site Proton donor/acceptor is the His134. His135 contacts (S)-2,3,4,5-tetrahydrodipicolinate. Lys138 functions as the Proton donor in the catalytic mechanism. 144-145 (GT) provides a ligand contact to (S)-2,3,4,5-tetrahydrodipicolinate.

This sequence belongs to the DapB family.

The protein localises to the cytoplasm. The catalysed reaction is (S)-2,3,4,5-tetrahydrodipicolinate + NAD(+) + H2O = (2S,4S)-4-hydroxy-2,3,4,5-tetrahydrodipicolinate + NADH + H(+). It carries out the reaction (S)-2,3,4,5-tetrahydrodipicolinate + NADP(+) + H2O = (2S,4S)-4-hydroxy-2,3,4,5-tetrahydrodipicolinate + NADPH + H(+). It functions in the pathway amino-acid biosynthesis; L-lysine biosynthesis via DAP pathway; (S)-tetrahydrodipicolinate from L-aspartate: step 4/4. In terms of biological role, catalyzes the conversion of 4-hydroxy-tetrahydrodipicolinate (HTPA) to tetrahydrodipicolinate. The sequence is that of 4-hydroxy-tetrahydrodipicolinate reductase from Legionella pneumophila (strain Paris).